A 613-amino-acid chain; its full sequence is Probable LRR receptor-like serine/threonine-protein kinase At5g10290 (613 aa).

The signal sequence occupies residues Met-1 to Gly-31. At Asp-32–Gly-225 the chain is on the extracellular side. Asn-81 and Asn-116 each carry an N-linked (GlcNAc...) asparagine glycan. LRR repeat units lie at residues Asn-95–Leu-117, Ser-119–Leu-141, Lys-143–Pro-166, and Asn-167–Ile-189. N-linked (GlcNAc...) asparagine glycosylation occurs at Asn-155. A glycan (N-linked (GlcNAc...) asparagine) is linked at Asn-193. A helical transmembrane segment spans residues Ile-226–Phe-246. Residues Cys-247–Arg-613 are Cytoplasmic-facing. Thr-287 is subject to Phosphothreonine. The Protein kinase domain maps to Phe-290–Leu-569. Leu-296–Val-304 contacts ATP. At Thr-313 the chain carries Phosphothreonine. Lys-318 serves as a coordination point for ATP. Ser-371 bears the Phosphoserine mark. Thr-390 carries the phosphothreonine modification. Residue Asp-417 is the Proton acceptor of the active site. Phosphothreonine is present on residues Thr-450, Thr-451, and Thr-456. A Phosphotyrosine modification is found at Tyr-464. Ser-466 carries the phosphoserine modification. Position 467 is a phosphothreonine (Thr-467). At Ser-471 the chain carries Phosphoserine. Thr-547 carries the post-translational modification Phosphothreonine.

This sequence belongs to the protein kinase superfamily. Ser/Thr protein kinase family.

It is found in the cell membrane. The enzyme catalyses L-seryl-[protein] + ATP = O-phospho-L-seryl-[protein] + ADP + H(+). It carries out the reaction L-threonyl-[protein] + ATP = O-phospho-L-threonyl-[protein] + ADP + H(+). The protein is Probable LRR receptor-like serine/threonine-protein kinase At5g10290 of Arabidopsis thaliana (Mouse-ear cress).